A 197-amino-acid polypeptide reads, in one-letter code: MHCLQVVIAIVLYSFGKISAENANCKKCTPMLVDSAFKEHGIVPDVVSTAPTKLVNVSYNNLTVNLGNELTPTQVKNQPTKVSWDAEPGALYTLVMTDPDAPSRKNPVFREWHHWLIINISGQNVSSGTVLSDYIGSGPRKGTGLHRYVFLVYKQPGSITDTQHGGNRRNFKVMDFANKHHLGNPVAGNFFQAKHED.

The N-terminal stretch at 1-16 is a signal peptide; that stretch reads MHCLQVVIAIVLYSFG. 4 N-linked (GlcNAc...) asparagine glycosylation sites follow: Asn56, Asn61, Asn119, and Asn124.

It belongs to the phosphatidylethanolamine-binding protein family. In terms of tissue distribution, hypodermis, cuticle and uterus.

This Onchocerca volvulus protein is OV-16 antigen (OV16).